The chain runs to 138 residues: uncharacterized protein (138 aa).

Its subcellular location is the plastid. The protein resides in the chloroplast. This is an uncharacterized protein from Chlorella vulgaris (Green alga).